We begin with the raw amino-acid sequence, 220 residues long: Inner membrane-spanning protein YciB (220 aa).

6 helical membrane passes run 20-40 (EVPP…FFFA), 57-77 (IGAP…IALA), 86-106 (LPIM…LTLW), 123-143 (LFGA…GYVF), 156-176 (KLTL…EVVW), and 187-207 (FKVW…MPLI).

Belongs to the YciB family.

It localises to the cell inner membrane. Its function is as follows. Plays a role in cell envelope biogenesis, maintenance of cell envelope integrity and membrane homeostasis. This Brucella anthropi (strain ATCC 49188 / DSM 6882 / CCUG 24695 / JCM 21032 / LMG 3331 / NBRC 15819 / NCTC 12168 / Alc 37) (Ochrobactrum anthropi) protein is Inner membrane-spanning protein YciB.